Reading from the N-terminus, the 69-residue chain is MAEMKTGDIRAMSDDQMDDAILNLKKERFNLRFQRATGQLEDTSRLREARRDIARIKTIAAQKRAGKTK.

Belongs to the universal ribosomal protein uL29 family.

This chain is Large ribosomal subunit protein uL29, found in Rhodopseudomonas palustris (strain BisB5).